A 159-amino-acid polypeptide reads, in one-letter code: Cyclic pyranopterin monophosphate synthase (159 aa).

Substrate is bound by residues Met-74 to His-76 and Met-112 to Glu-113. Asp-127 is a catalytic residue.

This sequence belongs to the MoaC family. As to quaternary structure, homohexamer; trimer of dimers.

It catalyses the reaction (8S)-3',8-cyclo-7,8-dihydroguanosine 5'-triphosphate = cyclic pyranopterin phosphate + diphosphate. Its pathway is cofactor biosynthesis; molybdopterin biosynthesis. Its function is as follows. Catalyzes the conversion of (8S)-3',8-cyclo-7,8-dihydroguanosine 5'-triphosphate to cyclic pyranopterin monophosphate (cPMP). This is Cyclic pyranopterin monophosphate synthase from Helicobacter hepaticus (strain ATCC 51449 / 3B1).